The chain runs to 319 residues: Taste receptor type 2 member 14 (319 aa).

Residues 1–7 (MDGVIKS) are Extracellular-facing. Residues 8-28 (IFTFILIVEFIIGNLGNSFIV) form a helical membrane-spanning segment. Over 29–55 (LVNCIDWVKRRKISLVDQILIALAISR) the chain is Cytoplasmic. The helical transmembrane segment at 56 to 76 (ISLVWSIFGSWCVSVFFPALF) threads the bilayer. At 77–87 (ATEKLLRMLTN) the chain is on the extracellular side. The cholesterol site is built by threonine 86 and tryptophan 89. A helical membrane pass occupies residues 88–108 (IWTVTNHFSVWLATILGTFYF). Over 109 to 129 (LKIANFSNSIFLYLKWRVKKV) the chain is Cytoplasmic. Residues 130 to 150 (VLVLLLVTLGLLFLNILLINI) form a helical membrane-spanning segment. The Extracellular portion of the chain corresponds to 151–184 (HINASINGYRGNMTCSSASCNFIRFSRAIALTST). Asparagine 153 and asparagine 162 each carry an N-linked (GlcNAc...) asparagine glycan. Position 180 (alanine 180) interacts with cholesterol. The helical transmembrane segment at 185-205 (VFVLIPFTLSLATSLLLSFSL) threads the bilayer. Residues 206-233 (WKHHKKMQHTVKGYRDVSTKAHRGVMQT) are Cytoplasmic-facing. A helical transmembrane segment spans residues 234-254 (VITFLLLYAVFLLTFFISIWA). The Extracellular segment spans residues 255 to 263 (SVRLKENQI). A helical transmembrane segment spans residues 264–284 (IILSEMMGLAYPSGHSCVLIL). Serine 267 and methionine 270 together coordinate cholesterol. Over 285–319 (GNKKLRQASLSVLWWLRYRFKHGEPSGHKEFRESS) the chain is Cytoplasmic.

The protein belongs to the G-protein coupled receptor T2R family. Core component of the TAS2R14-GNAI1 complex, consisting of TAS2R14, GNAI1, GNB1 and GNG2; within the complex interacts with GNAI1. Core component of the TAS2R14-GNAT3 complex, consisting of TAS2R14, GNAT3, GNB1 and GNG2; within the complex interacts with GNAT3. Core component of the TAS2R14-GNAS2 complex, consisting of TAS2R14, GNAS2, GNB1 and GNG2; within the complex interacts with GNAS2.

The protein localises to the membrane. It catalyses the reaction Ca(2+)(in) = Ca(2+)(out). It carries out the reaction 3',5'-cyclic AMP(in) = 3',5'-cyclic AMP(out). Basal activity is enhanced by binding to bitter tastants, such as flufenamic acid and aristolochic acid. Regulated by cholesterol in a concentration-dependent manner. Gustducin-linked G-protein coupled receptor that plays a role in the perception of bitterness. The activity of this receptor stimulates GNAT3, activating the gustducin G-protein pathway. Likely plays a role in sensing the chemical composition of the gastrointestinal content and other extra-oral tissues via the inhibitory G-protein pathways. The polypeptide is Taste receptor type 2 member 14 (TAS2R14) (Macaca mulatta (Rhesus macaque)).